Here is a 298-residue protein sequence, read N- to C-terminus: NAD-dependent L-serine dehydrogenase (298 aa).

NAD(+) contacts are provided by residues 2-31, 65-66, proline 66, and threonine 96; these read KQIA…NVFD and LP. Lysine 171 is an active-site residue. Lysine 246 serves as a coordination point for NAD(+).

Belongs to the HIBADH-related family. Homotetramer, dimer of dimers.

The catalysed reaction is L-serine + NAD(+) = aminoacetaldehyde + CO2 + NADH. It participates in amino-acid degradation. NAD-dependent L-serine dehydrogenase that catalyzes the oxidation of L-serine and methyl-L-serine and is possibly involved in serine catabolism. Has low activity toward beta-hydroxyisobutyrate. The chain is NAD-dependent L-serine dehydrogenase from Pseudomonas aeruginosa (strain ATCC 15692 / DSM 22644 / CIP 104116 / JCM 14847 / LMG 12228 / 1C / PRS 101 / PAO1).